We begin with the raw amino-acid sequence, 119 residues long: Large ribosomal subunit protein bL20 (119 aa).

The protein belongs to the bacterial ribosomal protein bL20 family.

Its function is as follows. Binds directly to 23S ribosomal RNA and is necessary for the in vitro assembly process of the 50S ribosomal subunit. It is not involved in the protein synthesizing functions of that subunit. The chain is Large ribosomal subunit protein bL20 from Gluconacetobacter diazotrophicus (strain ATCC 49037 / DSM 5601 / CCUG 37298 / CIP 103539 / LMG 7603 / PAl5).